We begin with the raw amino-acid sequence, 833 residues long: MSFYNHKEIEPKWQEFWAKNHTFKTGTDAEKPNFYALDMFPYPSGAGLHVGHPEGYTATDILSRYKRAQGYNVLHPMGWDAFGLPAEQYAMDTGNDPADFTAENIANFKRQINALGFSYDWDREVNTTDPNYYKWTQWIFTKLYEKGLAYEAEVPVNWVEELGTAIANEEVLPDGTSERGGYPVVRKPMRQWMLKITAYAERLLNDLEEVDWPESIKDMQRNWIGKSTGANVTFKIKDTDKDFTVFTTRPDTLFGATYAVLAPEHDLVDSITSAEQAEAVAEYKRQASLKSDLARTDLAKDKTGVWTGAYAINPVNGKEIPIWIADYVLASYGTGAIMAVPAHDERDWEFAKQFGLDIIPVLEGGNVEEAPYTEDGAHINSDFLDGLNKEEAIAKMVAWLEENGVGQEKISYRLRDWLFSRQRYWGEPIPIIHWEDGTSTAVPENELPLVLPKTSDIKPSGTGESPLANLTDWLEVVREDGVKGRRETNTMPQWAGSSWYYLRYIDPHNDEKLADEDLLKAWLPVDIYIGGAEHAVLHLLYARFWHKFLYDLGVVPTKEPFQKLFNQGMILGTSYRDSRGALVATDKVEKRDGSFFHMETGEELEQAPAKMSKSLKNVVNPDDVVEQFGADTLRVYEMFMGPLDASIAWSEEGLEGSRKFLDRVYRLLTTKELVAENSGALDKVYNETVKTVTEHIEDLKFNTAIAQLMIFVNAANKEDKLYVDYAKGFVQLIAPFAPHLAEELWQGLANTGQSISYVAWPTYDESKLVESEVEIVVQIKGKVKARLTVAKDLAPAELEKVALADEKVQAEIAGQTVVKVISVPNKLVNIVVK.

Residues proline 41 to histidine 52 carry the 'HIGH' region motif. The 'KMSKS' region motif lies at lysine 610 to serine 614. Lysine 613 provides a ligand contact to ATP.

It belongs to the class-I aminoacyl-tRNA synthetase family.

The protein localises to the cytoplasm. The catalysed reaction is tRNA(Leu) + L-leucine + ATP = L-leucyl-tRNA(Leu) + AMP + diphosphate. This is Leucine--tRNA ligase from Streptococcus suis (strain 98HAH33).